The following is a 154-amino-acid chain: Peptide deformylase (154 aa).

Positions 90 and 132 each coordinate Fe cation. Glu-133 is a catalytic residue. His-136 is a Fe cation binding site.

Belongs to the polypeptide deformylase family. Fe(2+) is required as a cofactor.

It carries out the reaction N-terminal N-formyl-L-methionyl-[peptide] + H2O = N-terminal L-methionyl-[peptide] + formate. Functionally, removes the formyl group from the N-terminal Met of newly synthesized proteins. Requires at least a dipeptide for an efficient rate of reaction. N-terminal L-methionine is a prerequisite for activity but the enzyme has broad specificity at other positions. This Desulforudis audaxviator (strain MP104C) protein is Peptide deformylase.